The sequence spans 991 residues: MSQFTSSYDPTSFEARLYAEWEAAGHFKPSGTGQPYTILLPPPNVTGTLHMGHAFQQTLMDALVRYHRMCGDDTLWQVGTDHAGIATEMVVSRNVMLEGRGETRDSLGRDGFINKVWEWKQQSGDTIERQMRRLGVSADWSRSTFTMDPQPSAAVTEAFVRWYEEGLIYRGQRLVNWDPVLKTAISDLEVENVAEEGMLWSIRYPLSDGVTYEHIEHDAAGNEILRETRDSLIVATTRPETLLGDTAVMVHPEDRRYTALIGKTVTLPLTGRQVEVISDTCVDPTFGSGVVKVTPAHDFNDFEVGVRHQLPMIKVLDDAACILSETYAQGWMTPLNNPKGDSRWINIIDIPESEFVIPAHLAGLDRYEARKQILADLDTQGLLVAAIPHTLQVPRGDRTGQVIEPYLTAQWFVRMDRLAARGLELVERGAVRFVPPNWINTYRHWMNNIRDWCISRQLWWGHRIPAWFDEYDGSFYVGRSEAEVRAKHALGPEVTLTQDSNVLETWFSSQLWPFSTLGWPDPTAMAERGFERYLPSSVLVTGFDIIFFWVARMIMATDHFTGNVPFHDVYITGLIRDAQGQKMSKSKGNVLDPLDIIDGITLDDLVAKRTTGLMQPKLAEKIAKATRKEFPDGIAPHGADALRFTIAALATHGRDIKFDLGRAEGYKNFCNKLWNATRFVLMNTADDTAHSPAQHQAGQDGQDAPRTPQPRTDAEQWILSRLAAVTAEAHAQFAAYRFDLLAQALYEFAWNEFCDWFVELAKPALNGNDTQAAASTRHTLLYVLETLLRLLHPLIPFITEELWRQVAPRLGIQATTLMLRPYPQPQQLETAAFANAAADVEWLKIMVSALRRIRSTLNVPPSRRISLLLQGGQEVDRHRITHFAIALHFLLKLEHIDWLSAATAAPPSAIAIVGSLKLLVPLEGLIDVDAERARLDKEIKRVESEIDKSNGKLSNAVFVQNAPTAVVEQERSRLTEWTTQLNGLRERRTTL.

The 'HIGH' region motif lies at 43–53; sequence PNVTGTLHMGH. Residues 582-586 carry the 'KMSKS' region motif; it reads KMSKS. Lys-585 is a binding site for ATP. The interval 689 to 711 is disordered; sequence AHSPAQHQAGQDGQDAPRTPQPR. Positions 693-704 are enriched in low complexity; the sequence is AQHQAGQDGQDA. The stretch at 925–988 forms a coiled coil; that stretch reads LIDVDAERAR…TQLNGLRERR (64 aa).

This sequence belongs to the class-I aminoacyl-tRNA synthetase family. ValS type 1 subfamily. Monomer.

It is found in the cytoplasm. It catalyses the reaction tRNA(Val) + L-valine + ATP = L-valyl-tRNA(Val) + AMP + diphosphate. Catalyzes the attachment of valine to tRNA(Val). As ValRS can inadvertently accommodate and process structurally similar amino acids such as threonine, to avoid such errors, it has a 'posttransfer' editing activity that hydrolyzes mischarged Thr-tRNA(Val) in a tRNA-dependent manner. This is Valine--tRNA ligase from Xylella fastidiosa (strain M12).